Reading from the N-terminus, the 136-residue chain is Orexigenic neuropeptide QRFP (136 aa).

Residues methionine 1 to cysteine 18 form the signal peptide. A propeptide spanning residues phenylalanine 19–arginine 90 is cleaved from the precursor. A Pyrrolidone carboxylic acid modification is found at glutamine 91. Residue phenylalanine 133 is modified to Phenylalanine amide.

The protein belongs to the RFamide neuropeptide family. As to quaternary structure, ligand for the G-protein coupled receptor QRFPR/GPR103. As to expression, expressed widely in the brain with highest expression levels in the cerebellum, medulla, pituitary, retina, vestibular nucleus, and white matter. Also expressed in the bladder, colon, coronary artery, parathyroid gland, prostate, testis, and thyroid.

The protein resides in the secreted. In terms of biological role, stimulates feeding behavior, metabolic rate and locomotor activity and increases blood pressure. May have orexigenic activity. May promote aldosterone secretion by the adrenal gland. The chain is Orexigenic neuropeptide QRFP from Homo sapiens (Human).